The chain runs to 518 residues: MDMYNNNIGMFRSLVCSSAPPFTEGHMCSDSHTALCDDLSSDEEMEIEELEKKIWRDKQRLKRLKEMAKNGLGTRLLLKQQHDDFPEHSSKRTMYKAQDGILKYMSKTMERYKAQGFVYGIVLENGKTVAGSSDNLREWWKDKVRFDRNGPAAIIKHQRDINLSDGSDSGSEVGDSTAQKLLELQDTTLGALLSALFPHCNPPQRRFPLEKGVTPPWWPTGKEDWWDQLSLPVDFRGVPPPYKKPHDLKKLWKIGVLIGVIRHMASDISNIPNLVRRSRSLQEKMTSREGALWLAALYREKAIVDQIAMSRENNNTSNFLVPATGGDPDVLFPESTDYDVELIGGTHRTNQQYPEFENNYNCVYKRKFEEDFGMPMHPTLLTCENSLCPYSQPHMGFLDRNLRENHQMTCPYKVTSFYQPTKPYGMTGLMVPCPDYNGMQQQVQSFQDQFNHPNDLYRPKAPQRGNDDLVEDLNPSPSTLNQNLGLVLPTDFNGGEETVGTENNLHNQGQELPTSWIQ.

Positions 37–73 (DDLSSDEEMEIEELEKKIWRDKQRLKRLKEMAKNGLG) form a coiled coil. Residues 450 to 518 (FNHPNDLYRP…GQELPTSWIQ (69 aa)) are disordered. 2 stretches are compositionally biased toward polar residues: residues 475–484 (PSPSTLNQNL) and 500–518 (GTEN…SWIQ).

Belongs to the EIN3 family. As to quaternary structure, acts as a homodimer to bind the primary ethylene response element.

Its subcellular location is the nucleus. In terms of biological role, probable transcription factor acting as a positive regulator in the ethylene response pathway. Could bind the primary ethylene response element present in the ETHYLENE-RESPONSE-FACTOR1 promoter. This is ETHYLENE INSENSITIVE 3-like 2 protein (EIL2) from Arabidopsis thaliana (Mouse-ear cress).